Here is an 873-residue protein sequence, read N- to C-terminus: Leucine--tRNA ligase (873 aa).

Positions 42-52 (PYPSGKLHMGH) match the 'HIGH' region motif. The tract at residues 624–643 (PVEIGGTEKMSKSKNNGVDP) is disordered. A 'KMSKS' region motif is present at residues 632 to 636 (KMSKS). ATP is bound at residue lysine 635.

This sequence belongs to the class-I aminoacyl-tRNA synthetase family.

The protein resides in the cytoplasm. It catalyses the reaction tRNA(Leu) + L-leucine + ATP = L-leucyl-tRNA(Leu) + AMP + diphosphate. The sequence is that of Leucine--tRNA ligase from Pseudomonas aeruginosa (strain ATCC 15692 / DSM 22644 / CIP 104116 / JCM 14847 / LMG 12228 / 1C / PRS 101 / PAO1).